Consider the following 320-residue polypeptide: Ferrochelatase (320 aa).

Positions 194 and 275 each coordinate Fe cation.

Belongs to the ferrochelatase family. Monomer.

The protein resides in the cytoplasm. The enzyme catalyses heme b + 2 H(+) = protoporphyrin IX + Fe(2+). Its pathway is porphyrin-containing compound metabolism; protoheme biosynthesis; protoheme from protoporphyrin-IX: step 1/1. Functionally, catalyzes the ferrous insertion into protoporphyrin IX. The polypeptide is Ferrochelatase (Escherichia coli (strain SMS-3-5 / SECEC)).